A 445-amino-acid chain; its full sequence is Probable phosphoglucosamine mutase (445 aa).

Residue S99 is the Phosphoserine intermediate of the active site. S99, D238, D240, and D242 together coordinate Mg(2+). S99 carries the phosphoserine modification.

Belongs to the phosphohexose mutase family. The cofactor is Mg(2+). Activated by phosphorylation.

It catalyses the reaction alpha-D-glucosamine 1-phosphate = D-glucosamine 6-phosphate. Its function is as follows. Catalyzes the conversion of glucosamine-6-phosphate to glucosamine-1-phosphate. The sequence is that of Probable phosphoglucosamine mutase from Methanobrevibacter smithii (strain ATCC 35061 / DSM 861 / OCM 144 / PS).